The chain runs to 846 residues: Inactive cap-specific mRNA (nucleoside-2'-O-)-methyltransferase 1B (846 aa).

The segment at 30–50 is disordered; that stretch reads DDEDDFVDDPSPTEQKTKAEK. In terms of domain architecture, G-patch spans 44 to 90; that stretch reads QKTKAEKKMERMGYKAGEGLGKNKQGIQEPIAISFREGKAGLGHEQW. One can recognise a RrmJ-type SAM-dependent 2'-O-MTase domain in the interval 184–413; the sequence is FFLNRSAMKT…ERFVVCKGLR (230 aa).

The protein is Inactive cap-specific mRNA (nucleoside-2'-O-)-methyltransferase 1B of Caenorhabditis briggsae.